We begin with the raw amino-acid sequence, 86 residues long: ATP synthase epsilon chain (86 aa).

It belongs to the ATPase epsilon chain family. As to quaternary structure, F-type ATPases have 2 components, CF(1) - the catalytic core - and CF(0) - the membrane proton channel. CF(1) has five subunits: alpha(3), beta(3), gamma(1), delta(1), epsilon(1). CF(0) has three main subunits: a, b and c.

It localises to the cell inner membrane. Produces ATP from ADP in the presence of a proton gradient across the membrane. The sequence is that of ATP synthase epsilon chain (atpC) from Caulobacter vibrioides (strain ATCC 19089 / CIP 103742 / CB 15) (Caulobacter crescentus).